Here is an 86-residue protein sequence, read N- to C-terminus: Large ribosomal subunit protein uL23 (86 aa).

The protein belongs to the universal ribosomal protein uL23 family. In terms of assembly, part of the 50S ribosomal subunit. Contacts protein L29.

Functionally, binds to 23S rRNA. One of the proteins that surrounds the polypeptide exit tunnel on the outside of the ribosome. This Methanococcus maripaludis (strain C7 / ATCC BAA-1331) protein is Large ribosomal subunit protein uL23.